The primary structure comprises 324 residues: NADH-ubiquinone oxidoreductase chain 1 (324 aa).

The next 8 helical transmembrane spans lie at 3–23 (FILS…SVAF), 77–97 (ISPI…PFFV), 104–124 (LGGL…MVAG), 150–170 (LALI…IYFF), 174–194 (IYMW…TISL), 226–246 (LIFM…CVIF), 250–270 (DVFN…FIWA), and 297–317 (YLLF…WIFF).

It belongs to the complex I subunit 1 family.

The protein resides in the mitochondrion inner membrane. The enzyme catalyses a ubiquinone + NADH + 5 H(+)(in) = a ubiquinol + NAD(+) + 4 H(+)(out). Its function is as follows. Core subunit of the mitochondrial membrane respiratory chain NADH dehydrogenase (Complex I) that is believed to belong to the minimal assembly required for catalysis. Complex I functions in the transfer of electrons from NADH to the respiratory chain. The immediate electron acceptor for the enzyme is believed to be ubiquinone. In Drosophila yakuba (Fruit fly), this protein is NADH-ubiquinone oxidoreductase chain 1 (mt:ND1).